Here is an 875-residue protein sequence, read N- to C-terminus: MLLQFLLLSLCVSVATAKVITGVFNSFNSLTWANAASYPYRGPATPTWTAVIGWSLDGATASAGDTFTLDMPCVFKFITDQTSIDLVADGRTYATCNLNSAEEFTTFSSVSCTVTTTMTADTKAIGTVTLPFSFSVGGSGSDVDLANSQCFTAGINTVTFNDGDTSISTTVDFEKSTVASSDRILLSRILPSLSQAVNLFLPQECANGYTSGTMGFSTAGTGATIDCSTVHVGISNGLNDWNYPISSESFSYTKTCTSTSVLVTFQNVPAGYRPFVDAYISATRVSSYTMQYTNIYACVGAASVDDSFTHTWRGYSNSQAGSNGITIVVTTRTVTDSTTAVTTLPFNSDTDKTKTIEILQPIPTTTITTSYVGVTTSYSTKTAPIGETATVIVDVPYHTTTTVTSEWTGTITTTTTRTNPTDSIDTVVVQVPSPNPTVTTTEYWSQSYATTTTVTAPPGGTDSVIIREPPNPTVTTTEYWSQSYATTLTITAPPGGTNSVIIRVHSSTNDESSESTFSTLSVPSFSGSISIVSTVSRPHYVNSTVTHLPSSSSKPVDIPSSDVVTSTNDNSLTSLTGSENGKTSVAISTTFCDDENGCQTSIPQGSVVRTTATTTATTTTIIGDNNGSGKSKSGELSSTGSVTTNTATPDVPSTKVPSNPGAPGTGVPPPLAPSTETQTTNNVPGSPNIPATGTTDIRESTTVSHTVTGNGNTGVPMNPNPALTTSTSLTGATNSATNPSHETGVNTGSGGSTNIVTPPSSATATVVIPGTDNGATTKGQDTAGGGNSNGSTATTNIQGGNNEPGNQPGTNTTGEPVGTTDTQSVESISQPTTLSQQTTSSLISTPLASTFDGSGSIVQHSAWLYVLLTAISIFF.

The first 17 residues, 1 to 17 (MLLQFLLLSLCVSVATA), serve as a signal peptide directing secretion. Cystine bridges form between cysteine 73–cysteine 150, cysteine 96–cysteine 112, cysteine 205–cysteine 298, and cysteine 227–cysteine 256. ALS repeat units lie at residues 365–396 (TTIT…VDVP), 401–432 (TTVT…VQVP), 438–469 (VTTT…IREP), and 474–502 (VTTT…SVII). Asparagine 542 is a glycosylation site (N-linked (GlcNAc...) asparagine). Disordered stretches follow at residues 546–580 (THLP…GSEN) and 619–837 (TTII…LSQQ). The segment covering 549 to 578 (PSSSSKPVDIPSSDVVTSTNDNSLTSLTGS) has biased composition (low complexity). A glycan (N-linked (GlcNAc...) asparagine) is linked at asparagine 626. Residues 627–641 (GSGKSKSGELSSTGS) show a composition bias toward low complexity. A compositionally biased stretch (polar residues) spans 674-715 (STETQTTNNVPGSPNIPATGTTDIRESTTVSHTVTGNGNTGV). Residues 722-746 (ALTTSTSLTGATNSATNPSHETGVN) show a composition bias toward low complexity. The segment covering 755–764 (IVTPPSSATA) has biased composition (polar residues). Asparagine 789 and asparagine 811 each carry an N-linked (GlcNAc...) asparagine glycan. Composition is skewed to low complexity over residues 789–816 (NGST…TGEP) and 827–837 (SISQPTTLSQQ). A lipid anchor (GPI-anchor amidated aspartate) is attached at aspartate 852. A propeptide spans 853–875 (GSGSIVQHSAWLYVLLTAISIFF) (removed in mature form).

Belongs to the ALS family. In terms of processing, N-glycosylated and O-glycosylated.

The protein resides in the cell membrane. It localises to the secreted. The protein localises to the cell wall. Functionally, cell surface adhesion protein which mediates both yeast-to-host tissue adherence and yeast aggregation. Plays an important role in the pathogenesis of C.albicans infections. This chain is Agglutinin-like protein 4 (ALS4), found in Candida albicans (Yeast).